The sequence spans 330 residues: GMP reductase (330 aa).

Catalysis depends on Cys-180, which acts as the Thioimidate intermediate. 209 to 232 is an NADP(+) binding site; the sequence is LIADGGIRHNGDIAKSVRFGASMV.

It belongs to the IMPDH/GMPR family. GuaC type 2 subfamily.

It carries out the reaction IMP + NH4(+) + NADP(+) = GMP + NADPH + 2 H(+). Catalyzes the irreversible NADPH-dependent deamination of GMP to IMP. It functions in the conversion of nucleobase, nucleoside and nucleotide derivatives of G to A nucleotides, and in maintaining the intracellular balance of A and G nucleotides. The chain is GMP reductase from Lactobacillus johnsonii (strain CNCM I-12250 / La1 / NCC 533).